We begin with the raw amino-acid sequence, 428 residues long: C4-dicarboxylate transport protein (428 aa).

The next 8 helical transmembrane spans lie at 8–28 (SLYF…HFYP), 44–64 (LIKM…IAGM), 76–96 (VALL…LIIV), 142–162 (IGAF…LFGF), 184–206 (VIFG…AMAF), 222–242 (LIIC…GSIA), 326–346 (IVHQ…AAGV), and 352–372 (IVLA…LALI).

The protein belongs to the dicarboxylate/amino acid:cation symporter (DAACS) (TC 2.A.23) family.

The protein localises to the cell inner membrane. Its function is as follows. Responsible for the transport of dicarboxylates such as succinate, fumarate, and malate from the periplasm across the membrane. The sequence is that of C4-dicarboxylate transport protein from Shigella flexneri.